We begin with the raw amino-acid sequence, 239 residues long: Ribosomal RNA small subunit methyltransferase G (239 aa).

S-adenosyl-L-methionine-binding positions include Gly79, Phe84, 130-131, and Arg149; that span reads AE.

This sequence belongs to the methyltransferase superfamily. RNA methyltransferase RsmG family.

The protein localises to the cytoplasm. In terms of biological role, specifically methylates the N7 position of a guanine in 16S rRNA. The sequence is that of Ribosomal RNA small subunit methyltransferase G from Pelotomaculum thermopropionicum (strain DSM 13744 / JCM 10971 / SI).